Consider the following 354-residue polypeptide: Lipoyl synthase, mitochondrial (354 aa).

[4Fe-4S] cluster is bound by residues Cys91, Cys96, Cys102, Cys122, Cys126, Cys129, and Ser337. Residues Asp107–Leu326 enclose the Radical SAM core domain.

The protein belongs to the radical SAM superfamily. Lipoyl synthase family. [4Fe-4S] cluster serves as cofactor.

It is found in the mitochondrion. It carries out the reaction [[Fe-S] cluster scaffold protein carrying a second [4Fe-4S](2+) cluster] + N(6)-octanoyl-L-lysyl-[protein] + 2 oxidized [2Fe-2S]-[ferredoxin] + 2 S-adenosyl-L-methionine + 4 H(+) = [[Fe-S] cluster scaffold protein] + N(6)-[(R)-dihydrolipoyl]-L-lysyl-[protein] + 4 Fe(3+) + 2 hydrogen sulfide + 2 5'-deoxyadenosine + 2 L-methionine + 2 reduced [2Fe-2S]-[ferredoxin]. The protein operates within protein modification; protein lipoylation via endogenous pathway; protein N(6)-(lipoyl)lysine from octanoyl-[acyl-carrier-protein]: step 2/2. Functionally, catalyzes the radical-mediated insertion of two sulfur atoms into the C-6 and C-8 positions of the octanoyl moiety bound to the lipoyl domains of lipoate-dependent enzymes, thereby converting the octanoylated domains into lipoylated derivatives. This Caenorhabditis elegans protein is Lipoyl synthase, mitochondrial.